A 393-amino-acid chain; its full sequence is Protein TsgA (393 aa).

12 helical membrane passes run 11–31 (WISFLSYALTGALVIVTGMVM), 51–71 (FLNAGILISIFLNAWLMEIVP), 78–98 (FGFILMILAVAGLMLSHSLAL), 101–121 (AAMFVLGLVSGITMSIGTFLI), 134–154 (LLFTDSFFSMAGMVFPMVAAF), 162–182 (WYWVYACIGLVYLAIFILTFG), 206–226 (IGVLFLAVAALCYILGQLGFI), 245–265 (ALVSDFWMSYMFGMWAFSFIL), 273–293 (ILTVLAGMATVLMYLFITGTQ), 298–318 (WFILTLGFFSSAIYTSIITLG), 332–352 (FILTCGTIGTMLTFVVTGPIV), and 361–381 (LLTANGLYAVVFVMCFALGFV).

This sequence belongs to the major facilitator superfamily. TsgA family.

The protein localises to the cell inner membrane. The polypeptide is Protein TsgA (Salmonella arizonae (strain ATCC BAA-731 / CDC346-86 / RSK2980)).